The sequence spans 321 residues: Lipoyl synthase (321 aa).

Cys-68, Cys-73, Cys-79, Cys-94, Cys-98, Cys-101, and Ser-308 together coordinate [4Fe-4S] cluster. The region spanning 80–297 (FNHGTATFMI…KAEAMAMGFT (218 aa)) is the Radical SAM core domain.

This sequence belongs to the radical SAM superfamily. Lipoyl synthase family. It depends on [4Fe-4S] cluster as a cofactor.

Its subcellular location is the cytoplasm. The catalysed reaction is [[Fe-S] cluster scaffold protein carrying a second [4Fe-4S](2+) cluster] + N(6)-octanoyl-L-lysyl-[protein] + 2 oxidized [2Fe-2S]-[ferredoxin] + 2 S-adenosyl-L-methionine + 4 H(+) = [[Fe-S] cluster scaffold protein] + N(6)-[(R)-dihydrolipoyl]-L-lysyl-[protein] + 4 Fe(3+) + 2 hydrogen sulfide + 2 5'-deoxyadenosine + 2 L-methionine + 2 reduced [2Fe-2S]-[ferredoxin]. It functions in the pathway protein modification; protein lipoylation via endogenous pathway; protein N(6)-(lipoyl)lysine from octanoyl-[acyl-carrier-protein]: step 2/2. Functionally, catalyzes the radical-mediated insertion of two sulfur atoms into the C-6 and C-8 positions of the octanoyl moiety bound to the lipoyl domains of lipoate-dependent enzymes, thereby converting the octanoylated domains into lipoylated derivatives. The polypeptide is Lipoyl synthase (Cronobacter sakazakii (strain ATCC BAA-894) (Enterobacter sakazakii)).